Consider the following 205-residue polypeptide: Thiamine-phosphate synthase (205 aa).

Residues Q34–K38 and N66 each bind 4-amino-2-methyl-5-(diphosphooxymethyl)pyrimidine. D67 and D86 together coordinate Mg(2+). Residue S105 participates in 4-amino-2-methyl-5-(diphosphooxymethyl)pyrimidine binding. T131 to T133 lines the 2-[(2R,5Z)-2-carboxy-4-methylthiazol-5(2H)-ylidene]ethyl phosphate pocket. 4-amino-2-methyl-5-(diphosphooxymethyl)pyrimidine is bound at residue K134. G163 contacts 2-[(2R,5Z)-2-carboxy-4-methylthiazol-5(2H)-ylidene]ethyl phosphate.

It belongs to the thiamine-phosphate synthase family. Mg(2+) serves as cofactor.

It carries out the reaction 2-[(2R,5Z)-2-carboxy-4-methylthiazol-5(2H)-ylidene]ethyl phosphate + 4-amino-2-methyl-5-(diphosphooxymethyl)pyrimidine + 2 H(+) = thiamine phosphate + CO2 + diphosphate. The catalysed reaction is 2-(2-carboxy-4-methylthiazol-5-yl)ethyl phosphate + 4-amino-2-methyl-5-(diphosphooxymethyl)pyrimidine + 2 H(+) = thiamine phosphate + CO2 + diphosphate. It catalyses the reaction 4-methyl-5-(2-phosphooxyethyl)-thiazole + 4-amino-2-methyl-5-(diphosphooxymethyl)pyrimidine + H(+) = thiamine phosphate + diphosphate. It participates in cofactor biosynthesis; thiamine diphosphate biosynthesis; thiamine phosphate from 4-amino-2-methyl-5-diphosphomethylpyrimidine and 4-methyl-5-(2-phosphoethyl)-thiazole: step 1/1. Condenses 4-methyl-5-(beta-hydroxyethyl)thiazole monophosphate (THZ-P) and 2-methyl-4-amino-5-hydroxymethyl pyrimidine pyrophosphate (HMP-PP) to form thiamine monophosphate (TMP). This Neisseria meningitidis serogroup A / serotype 4A (strain DSM 15465 / Z2491) protein is Thiamine-phosphate synthase.